Here is a 428-residue protein sequence, read N- to C-terminus: Putative ankyrin repeat protein FPV234 (428 aa).

8 ANK repeats span residues 6 to 35 (KDDI…DPNV), 39 to 68 (YQYS…DPNI), 71 to 100 (FFTP…IVNL), 103 to 132 (YCLK…DINS), 137 to 169 (NGKY…DINK), 174 to 202 (TNTS…NINI), 206 to 238 (MGRN…DINA), and 242 to 271 (EGNT…YLSY).

The protein is Putative ankyrin repeat protein FPV234 of Fowlpox virus (strain NVSL) (FPV).